The sequence spans 388 residues: Protein kes1 (388 aa).

Belongs to the OSBP family.

Functionally, lipid transporter involved in lipid countertransport between the Golgi complex and membranes of the endoplasmic reticulum: specifically exchanges sterol with phosphatidylinositol 4-phosphate (PI4P), delivering sterol to the Golgi in exchange for PI4P, which is degraded by the SAC1 phosphatase in the endoplasmic reticulum. The polypeptide is Protein kes1 (kes1) (Schizosaccharomyces pombe (strain 972 / ATCC 24843) (Fission yeast)).